The sequence spans 404 residues: Cysteine desulfurase IscS (404 aa).

Residues 75–76 (AT), Asn-155, Gln-183, and 203–205 (SAH) contribute to the pyridoxal 5'-phosphate site. Lys-206 is subject to N6-(pyridoxal phosphate)lysine. Pyridoxal 5'-phosphate is bound at residue Thr-243. Cys-328 functions as the Cysteine persulfide intermediate in the catalytic mechanism. Cys-328 lines the [2Fe-2S] cluster pocket.

This sequence belongs to the class-V pyridoxal-phosphate-dependent aminotransferase family. NifS/IscS subfamily. As to quaternary structure, homodimer. Forms a heterotetramer with IscU, interacts with other sulfur acceptors. Pyridoxal 5'-phosphate is required as a cofactor.

Its subcellular location is the cytoplasm. The enzyme catalyses (sulfur carrier)-H + L-cysteine = (sulfur carrier)-SH + L-alanine. The protein operates within cofactor biosynthesis; iron-sulfur cluster biosynthesis. Its function is as follows. Master enzyme that delivers sulfur to a number of partners involved in Fe-S cluster assembly, tRNA modification or cofactor biosynthesis. Catalyzes the removal of elemental sulfur atoms from cysteine to produce alanine. Functions as a sulfur delivery protein for Fe-S cluster synthesis onto IscU, an Fe-S scaffold assembly protein, as well as other S acceptor proteins. The chain is Cysteine desulfurase IscS from Buchnera aphidicola subsp. Baizongia pistaciae (strain Bp).